The following is a 72-amino-acid chain: MSSKTASTNSIAQARRTVQQLRLEASIERIKVSKASADLMSYCEEHARSDPLLMGIPTSENPFKDKKTCIIL.

N-acetylserine is present on Ser2. A phosphoserine mark is found at Ser10 and Ser26. Tyr42 carries the post-translational modification Phosphotyrosine. Phosphoserine is present on Ser49. Cys69 is subject to Cysteine methyl ester. The S-geranylgeranyl cysteine moiety is linked to residue Cys69. Positions 70 to 72 are cleaved as a propeptide — removed in mature form; it reads IIL.

It belongs to the G protein gamma family. G proteins are composed of 3 units, alpha, beta and gamma.

It is found in the cell membrane. In terms of biological role, guanine nucleotide-binding proteins (G proteins) are involved as a modulator or transducer in various transmembrane signaling systems. The beta and gamma chains are required for the GTPase activity, for replacement of GDP by GTP, and for G protein-effector interaction. The sequence is that of Guanine nucleotide-binding protein G(I)/G(S)/G(O) subunit gamma-12 (Gng12) from Mus musculus (Mouse).